The following is a 556-amino-acid chain: Formate--tetrahydrofolate ligase 1 (556 aa).

65–72 (TPAGEGKS) provides a ligand contact to ATP.

It belongs to the formate--tetrahydrofolate ligase family.

The enzyme catalyses (6S)-5,6,7,8-tetrahydrofolate + formate + ATP = (6R)-10-formyltetrahydrofolate + ADP + phosphate. It participates in one-carbon metabolism; tetrahydrofolate interconversion. The protein is Formate--tetrahydrofolate ligase 1 of Streptococcus pyogenes serotype M4 (strain MGAS10750).